A 361-amino-acid polypeptide reads, in one-letter code: Beta-hexosaminidase (361 aa).

Residues Asp69, Arg77, Arg144, and 174–175 (KH) each bind substrate. The active-site Proton donor/acceptor is His187. Catalysis depends on Asp258, which acts as the Nucleophile.

This sequence belongs to the glycosyl hydrolase 3 family. NagZ subfamily.

The protein localises to the cytoplasm. It catalyses the reaction Hydrolysis of terminal non-reducing N-acetyl-D-hexosamine residues in N-acetyl-beta-D-hexosaminides.. The protein operates within cell wall biogenesis; peptidoglycan recycling. In terms of biological role, plays a role in peptidoglycan recycling by cleaving the terminal beta-1,4-linked N-acetylglucosamine (GlcNAc) from peptide-linked peptidoglycan fragments, giving rise to free GlcNAc, anhydro-N-acetylmuramic acid and anhydro-N-acetylmuramic acid-linked peptides. The sequence is that of Beta-hexosaminidase from Neisseria meningitidis serogroup C (strain 053442).